A 487-amino-acid chain; its full sequence is Cysteine--tRNA ligase (487 aa).

Cys-27 provides a ligand contact to Zn(2+). A 'HIGH' region motif is present at residues 29 to 39 (ATVQGLPHVGH). The segment at 174–194 (IDDMQGAPDADPRGKKDPRDF) is disordered. Over residues 183–194 (ADPRGKKDPRDF) the composition is skewed to basic and acidic residues. Residues Cys-225, His-250, and Glu-254 each coordinate Zn(2+). Residues 281–285 (KMSKS) carry the 'KMSKS' region motif. Lys-284 provides a ligand contact to ATP.

This sequence belongs to the class-I aminoacyl-tRNA synthetase family. In terms of assembly, monomer. The cofactor is Zn(2+).

The protein resides in the cytoplasm. The catalysed reaction is tRNA(Cys) + L-cysteine + ATP = L-cysteinyl-tRNA(Cys) + AMP + diphosphate. This is Cysteine--tRNA ligase from Arthrobacter sp. (strain FB24).